The following is a 350-amino-acid chain: Methionine import ATP-binding protein MetN (350 aa).

One can recognise an ABC transporter domain in the interval 2–241; it reads IQIKNLKKEY…PQAPVTRSFV (240 aa). Position 38–45 (38–45) interacts with ATP; the sequence is GHSGAGKS.

Belongs to the ABC transporter superfamily. Methionine importer (TC 3.A.1.24) family. As to quaternary structure, the complex is composed of two ATP-binding proteins (MetN), two transmembrane proteins (MetI) and a solute-binding protein (MetQ).

It localises to the cell inner membrane. It catalyses the reaction L-methionine(out) + ATP + H2O = L-methionine(in) + ADP + phosphate + H(+). The enzyme catalyses D-methionine(out) + ATP + H2O = D-methionine(in) + ADP + phosphate + H(+). Functionally, part of the ABC transporter complex MetNIQ involved in methionine import. Responsible for energy coupling to the transport system. This is Methionine import ATP-binding protein MetN from Francisella tularensis subsp. tularensis (strain FSC 198).